We begin with the raw amino-acid sequence, 131 residues long: Small ribosomal subunit protein uS8 (131 aa).

It belongs to the universal ribosomal protein uS8 family. Part of the 30S ribosomal subunit. Contacts proteins S5 and S12.

Its function is as follows. One of the primary rRNA binding proteins, it binds directly to 16S rRNA central domain where it helps coordinate assembly of the platform of the 30S subunit. This Wolinella succinogenes (strain ATCC 29543 / DSM 1740 / CCUG 13145 / JCM 31913 / LMG 7466 / NCTC 11488 / FDC 602W) (Vibrio succinogenes) protein is Small ribosomal subunit protein uS8.